A 334-amino-acid polypeptide reads, in one-letter code: Protein-methionine-sulfoxide reductase catalytic subunit MsrP (334 aa).

The segment at residues 1 to 44 is a signal peptide (tat-type signal); the sequence is MKKIRKLTEADVTAESAFFMQRRQVLKALGISAAALSLPNAAHA. Residues Asn88, 91-92, Cys146, Thr181, Asn233, Arg238, and 249-251 contribute to the Mo-molybdopterin site; these read YE and GIK.

Belongs to the MsrP family. In terms of assembly, heterodimer of a catalytic subunit (MsrP) and a heme-binding subunit (MsrQ). The cofactor is Mo-molybdopterin. In terms of processing, predicted to be exported by the Tat system. The position of the signal peptide cleavage has not been experimentally proven.

Its subcellular location is the periplasm. The enzyme catalyses L-methionyl-[protein] + a quinone + H2O = L-methionyl-(S)-S-oxide-[protein] + a quinol. It carries out the reaction L-methionyl-[protein] + a quinone + H2O = L-methionyl-(R)-S-oxide-[protein] + a quinol. Functionally, part of the MsrPQ system that repairs oxidized periplasmic proteins containing methionine sulfoxide residues (Met-O), using respiratory chain electrons. Thus protects these proteins from oxidative-stress damage caused by reactive species of oxygen and chlorine generated by the host defense mechanisms. MsrPQ is essential for the maintenance of envelope integrity under bleach stress, rescuing a wide series of structurally unrelated periplasmic proteins from methionine oxidation, including the primary periplasmic chaperone SurA and the lipoprotein Pal. The catalytic subunit MsrP is non-stereospecific, being able to reduce both (R-) and (S-) diastereoisomers of methionine sulfoxide. The protein is Protein-methionine-sulfoxide reductase catalytic subunit MsrP of Escherichia fergusonii (strain ATCC 35469 / DSM 13698 / CCUG 18766 / IAM 14443 / JCM 21226 / LMG 7866 / NBRC 102419 / NCTC 12128 / CDC 0568-73).